The chain runs to 160 residues: Cyclic pyranopterin monophosphate synthase (160 aa).

Substrate-binding positions include 74–76 and 112–113; these read LSH and ME. The active site involves Asp-127.

It belongs to the MoaC family. Homohexamer; trimer of dimers.

The enzyme catalyses (8S)-3',8-cyclo-7,8-dihydroguanosine 5'-triphosphate = cyclic pyranopterin phosphate + diphosphate. The protein operates within cofactor biosynthesis; molybdopterin biosynthesis. Catalyzes the conversion of (8S)-3',8-cyclo-7,8-dihydroguanosine 5'-triphosphate to cyclic pyranopterin monophosphate (cPMP). The polypeptide is Cyclic pyranopterin monophosphate synthase (Geobacter sulfurreducens (strain ATCC 51573 / DSM 12127 / PCA)).